The chain runs to 161 residues: ATP synthase subunit b 1 (161 aa).

Residues 3–23 form a helical membrane-spanning segment; that stretch reads FDASFFALVGLVLFFVLIAYL.

The protein belongs to the ATPase B chain family. In terms of assembly, F-type ATPases have 2 components, F(1) - the catalytic core - and F(0) - the membrane proton channel. F(1) has five subunits: alpha(3), beta(3), gamma(1), delta(1), epsilon(1). F(0) has three main subunits: a(1), b(2) and c(10-14). The alpha and beta chains form an alternating ring which encloses part of the gamma chain. F(1) is attached to F(0) by a central stalk formed by the gamma and epsilon chains, while a peripheral stalk is formed by the delta and b chains.

It localises to the cell inner membrane. F(1)F(0) ATP synthase produces ATP from ADP in the presence of a proton or sodium gradient. F-type ATPases consist of two structural domains, F(1) containing the extramembraneous catalytic core and F(0) containing the membrane proton channel, linked together by a central stalk and a peripheral stalk. During catalysis, ATP synthesis in the catalytic domain of F(1) is coupled via a rotary mechanism of the central stalk subunits to proton translocation. Functionally, component of the F(0) channel, it forms part of the peripheral stalk, linking F(1) to F(0). The sequence is that of ATP synthase subunit b 1 from Agrobacterium fabrum (strain C58 / ATCC 33970) (Agrobacterium tumefaciens (strain C58)).